Reading from the N-terminus, the 224-residue chain is 7-cyano-7-deazaguanine synthase (224 aa).

14 to 24 (FSGGQDSTTCL) lines the ATP pocket. 4 residues coordinate Zn(2+): Cys-190, Cys-198, Cys-201, and Cys-204.

It belongs to the QueC family. The cofactor is Zn(2+).

The enzyme catalyses 7-carboxy-7-deazaguanine + NH4(+) + ATP = 7-cyano-7-deazaguanine + ADP + phosphate + H2O + H(+). The protein operates within purine metabolism; 7-cyano-7-deazaguanine biosynthesis. Catalyzes the ATP-dependent conversion of 7-carboxy-7-deazaguanine (CDG) to 7-cyano-7-deazaguanine (preQ(0)). The chain is 7-cyano-7-deazaguanine synthase from Haemophilus ducreyi (strain 35000HP / ATCC 700724).